Reading from the N-terminus, the 283-residue chain is Bifunctional protein FolD 2 (283 aa).

NADP(+) contacts are provided by residues 165-167 (GRG), Thr192, and Val233.

The protein belongs to the tetrahydrofolate dehydrogenase/cyclohydrolase family. In terms of assembly, homodimer.

The catalysed reaction is (6R)-5,10-methylene-5,6,7,8-tetrahydrofolate + NADP(+) = (6R)-5,10-methenyltetrahydrofolate + NADPH. It catalyses the reaction (6R)-5,10-methenyltetrahydrofolate + H2O = (6R)-10-formyltetrahydrofolate + H(+). It functions in the pathway one-carbon metabolism; tetrahydrofolate interconversion. Catalyzes the oxidation of 5,10-methylenetetrahydrofolate to 5,10-methenyltetrahydrofolate and then the hydrolysis of 5,10-methenyltetrahydrofolate to 10-formyltetrahydrofolate. The protein is Bifunctional protein FolD 2 of Nocardioides sp. (strain ATCC BAA-499 / JS614).